The chain runs to 350 residues: Mannonate dehydratase (350 aa).

It belongs to the mannonate dehydratase family. Fe(2+) is required as a cofactor. It depends on Mn(2+) as a cofactor.

It carries out the reaction D-mannonate = 2-dehydro-3-deoxy-D-gluconate + H2O. It participates in carbohydrate metabolism; pentose and glucuronate interconversion. Its function is as follows. Catalyzes the dehydration of D-mannonate. The polypeptide is Mannonate dehydratase (Clostridium perfringens (strain 13 / Type A)).